Consider the following 857-residue polypeptide: Leucine--tRNA ligase (857 aa).

The short motif at 42–52 is the 'HIGH' region element; it reads PYPSGRLHMGH. The 'KMSKS' region motif lies at 617–621; sequence KMSKS. Position 620 (Lys620) interacts with ATP.

It belongs to the class-I aminoacyl-tRNA synthetase family.

The protein resides in the cytoplasm. The catalysed reaction is tRNA(Leu) + L-leucine + ATP = L-leucyl-tRNA(Leu) + AMP + diphosphate. The protein is Leucine--tRNA ligase of Vibrio vulnificus (strain CMCP6).